We begin with the raw amino-acid sequence, 797 residues long: MDELAGGGGGGPGMAAPPRQQQGPGGNLGLSPGGNGAAGGGGPPASEGAGPAAGPELSRPQQYTIPGILHYIQHEWARFEMERAHWEVERAELQARIAFLQGERKGQENLKKDLVRRIKMLEYALKQERAKYHKLKYGTELNQGDLKMPTFESEETKDTEAPTAPQNSQLTWKQGRQLLRQYLQEVGYTDTILDVRSQRVRSLLGLSNSEPNGSVETKNLEQILNGGESPKQKGQEIKRSSGDVLETFNFLENADDSDEDEENDMIEGIPEGKDKHRMNKHKIGNEGLAADLTDDPDTEEALKEFDFLVTAEDGEGAGEARSSGDGTEWDKDDLSPTAEVWDVDQGLISKLKEQYKKERKGKKGVKRANRTKLYDMIADLGDDELPHIPSGIINQSRSASTRMTDHEGARAEEAEPITFPSGGGKSFIMGSDDVLLSVLGLGDLADLTVTNDADYSYDLPANKDAFRKTWNPKYTLRSHFDGVRALAFHPVEPVLVTASEDHTLKLWNLQKTVPAKKSASLDVEPIYTFRAHIGPVLSLAISSNGEQCFSGGIDATIQWWNMPSPSVDPYDTYEPNVLAGTLVGHTDAVWGLAYSGIKNQLLSCSADGTVRLWNPQEKLPCICTYNGDKKHGIPTSVDFIGCDPAHMVTSFNTGSAVIYDLETSQSLVILSSQVDSGLQSNNHINRVVSHPTLPVTITAHEDRHIKFFDNKTGKMIHSMVAHLDAVTSLAVDPNGIYLMSGSHDCSIRLWNLDSKTCVQEITAHRKKLDESIYDVAFHSSKAYIASAGADALAKVFV.

Methionine 1 carries the N-acetylmethionine modification. 2 stretches are compositionally biased toward gly residues: residues 1–13 and 23–43; these read MDEL…GGPG and GPGG…GGGP. Residues 1-60 are disordered; that stretch reads MDELAGGGGGGPGMAAPPRQQQGPGGNLGLSPGGNGAAGGGGPPASEGAGPAAGPELSRP. Over residues 44–56 the composition is skewed to low complexity; that stretch reads PASEGAGPAAGPE. Positions 71–79 are caveolin-binding; that stretch reads YIQHEWARF. Residues 77–136 adopt a coiled-coil conformation; the sequence is ARFEMERAHWEVERAELQARIAFLQGERKGQENLKKDLVRRIKMLEYALKQERAKYHKLK. A Phosphothreonine modification is found at threonine 150. The segment at 166–183 is calmodulin-binding; that stretch reads QNSQLTWKQGRQLLRQYL. Phosphoserine occurs at positions 202, 214, and 229. Disordered regions lie at residues 224-278 and 313-338; these read LNGG…KHRM and DGEG…SPTA. A compositionally biased stretch (basic and acidic residues) spans 230-241; the sequence is PKQKGQEIKRSS. Residues 253–265 show a composition bias toward acidic residues; the sequence is NADDSDEDEENDM. Residues serine 257 and serine 335 each carry the phosphoserine modification. WD repeat units lie at residues 478–517, 531–570, 584–623, 679–718, 721–760, and 767–797; these read SHFD…PAKK, AHIG…VDPY, GHTD…PCIC, QSNN…MIHS, AHLD…CVQE, and KLDE…KVFV.

This sequence belongs to the WD repeat striatin family. In terms of assembly, tetramerizes. Part of the core of STRIPAK complexes composed of PP2A catalytic and scaffolding subunits, the striatins (PP2A regulatory subunits), the striatin-associated proteins MOB4, STRIP1 and STRIP2, PDCD10 and members of the STE20 kinases, such as STK24 and STK26. The STRIPAK complex can be extended by adapter proteins such as SLMAP:SIKE1 or CTTNBP2NL. Interacts with CDC42BPB.

The protein resides in the cytoplasm. The protein localises to the membrane. Its function is as follows. Calmodulin-binding scaffolding protein which is the center of the striatin-interacting phosphatase and kinase (STRIPAK) complexes. STRIPAK complexes have critical roles in protein (de)phosphorylation and are regulators of multiple signaling pathways including Hippo, MAPK, nuclear receptor and cytoskeleton remodeling. Different types of STRIPAK complexes are involved in a variety of biological processes such as cell growth, differentiation, apoptosis, metabolism and immune regulation. The polypeptide is Striatin-3 (Homo sapiens (Human)).